The following is a 542-amino-acid chain: Sodium/hydrogen exchanger 8 (542 aa).

The next 11 membrane-spanning stretches (helical) occupy residues 55–75 (EQSS…CIIL), 79–99 (LIRY…LGIL), 118–138 (EEMF…IFES), 151–171 (IGSI…VVGG), 186–206 (NMTD…VATI), 256–276 (TFLQ…ALGT), 306–326 (AYLP…VFAF), 349–369 (LVLF…NFFR), 374–394 (TPKM…PYAL), 412–432 (TTIV…MPLI), and 446–466 (NKKD…ESEH). Thr471 carries the phosphothreonine modification. Ser532 and Ser534 each carry phosphoserine.

The protein belongs to the monovalent cation:proton antiporter 1 (CPA1) transporter (TC 2.A.36) family.

The protein localises to the golgi apparatus membrane. The protein resides in the golgi apparatus. It localises to the trans-Golgi network membrane. It is found in the endosome. Its subcellular location is the multivesicular body membrane. The protein localises to the apical cell membrane. The protein resides in the cytoplasmic vesicle. It localises to the secretory vesicle. It is found in the acrosome. The catalysed reaction is Na(+)(in) + H(+)(out) = Na(+)(out) + H(+)(in). Functionally, na(+)/H(+) antiporter. Mediates the electoneutral exchange of intracellular H(+) ions for extracellular Na(+) in 1:1 stoichiometry. Acts as an Na(+)/H(+) exchanger in the trans-Golgi. Contributes to the regulation of pH regulation of Golgi apparatus, and consequently, in protein trafficking and endosomal morphology. In germ cells, plays a crucial role in acrosome biogenesis and sperm development, probably by playing a role in the fusion of the Golgi-derived vesicles that form the acrosomal cap. Can also be active at the cell surface of specialized cells. In the small intestine, at the cell membrane, plays a major physiological role in transepithelial absorption of Na(+) and regulates intracellular pH homeostasis of intestinal epithelial cells. Acts as an important regulator of mucosal integrity in the intestine and in the stomach, could mediate the pH fluctuation necessary for mucin exocytosis or assist membrane trafficking of other proteins. Plays a role in photoreceptor survival and in the maintenance of intracellular pH homeostasis in retinal pigment epithelium (RPE cells). This is Sodium/hydrogen exchanger 8 (SLC9A8) from Macaca fascicularis (Crab-eating macaque).